Here is a 657-residue protein sequence, read N- to C-terminus: Glycogen debranching enzyme (657 aa).

Aspartate 336 serves as the catalytic Nucleophile. Residue glutamate 371 is the Proton donor of the active site. Over residues asparagine 458–aspartate 467 the composition is skewed to basic and acidic residues. Residues asparagine 458–lysine 479 are disordered.

Belongs to the glycosyl hydrolase 13 family.

The catalysed reaction is Hydrolysis of (1-&gt;6)-alpha-D-glucosidic linkages to branches with degrees of polymerization of three or four glucose residues in limit dextrin.. It functions in the pathway glycan degradation; glycogen degradation. Functionally, removes maltotriose and maltotetraose chains that are attached by 1,6-alpha-linkage to the limit dextrin main chain, generating a debranched limit dextrin. The sequence is that of Glycogen debranching enzyme from Escherichia coli O139:H28 (strain E24377A / ETEC).